The chain runs to 352 residues: Dof zinc finger protein DOF1.8 (352 aa).

The interval 24–46 (LKQQSNPPSPATPVERKARPEKD) is disordered. Basic and acidic residues predominate over residues 37–46 (VERKARPEKD). The segment at 49–103 (LNCPRCNSLNTKFCYYNNYSLTQPRYFCKDCRRYWTAGGSLRNIPVGGGVRKNKR) adopts a Dof-type zinc-finger fold. Zn(2+) is bound by residues Cys51, Cys54, Cys76, and Cys79. Disordered regions lie at residues 93-136 (PVGG…PLPH) and 265-334 (GGDP…VGFW). A compositionally biased stretch (low complexity) spans 104–129 (SSSNSSSSSPSSSSSSKKPLFANNNT). The span at 310 to 323 (ENNDEHSDHEHEKE) shows a compositional bias: basic and acidic residues.

It is found in the nucleus. Its function is as follows. Transcription factor that binds specifically to a 5'-AA[AG]G-3' consensus core sequence. The protein is Dof zinc finger protein DOF1.8 (DOF1.8) of Arabidopsis thaliana (Mouse-ear cress).